Consider the following 126-residue polypeptide: Putative esterase ComA2 (126 aa).

The protein belongs to the thioesterase PaaI family.

Its function is as follows. Is not required for competence. The chain is Putative esterase ComA2 (yuxO) from Bacillus subtilis (strain 168).